The following is a 400-amino-acid chain: Large envelope protein (400 aa).

Residue Met-1 is modified to N-acetylmethionine. Gly-2 is lipidated: N-myristoyl glycine; by host. The pre-S1 stretch occupies residues 2 to 119 (GAPLSTARRG…PPLRDTHPQA (118 aa)). Residues 2-174 (GAPLSTARRG…FSKTGDPAMN (173 aa)) are pre-S. Residues 2–181 (GAPLSTARRG…AMNMENITSG (180 aa)) are Virion surface; in external conformation-facing. Residues 2 to 253 (GAPLSTARRG…PGYRWMCLRR (252 aa)) lie on the Intravirion; in internal conformation side of the membrane. The N-linked (GlcNAc...) asparagine glycan is linked to Pro-4. The tract at residues 70 to 115 (PHGGLLGWSPQAQGILTTSPPDPPPASTNRRSGRKPTPVSPPLRDT) is disordered. Residues 79–88 (PQAQGILTTS) show a composition bias toward polar residues. The pre-S2 stretch occupies residues 120 to 174 (MQWNSTQFHQALLDPRVRGLYLPAGGSSSETQNPVPTIASLTSSIFSKTGDPAMN). The chain crosses the membrane as a helical span at residues 182 to 202 (LLGPLLVLQAVCFLLTKILTI). Residues 203-253 (PQSLDSWWTSLNFLGVPPGCPGQNSQSPISNHLPTSCPPTCPGYRWMCLRR) are Intravirion; in external conformation-facing. A helical membrane pass occupies residues 254 to 274 (FIIFLFILLLCLIFLLVLLDY). Residues 275 to 348 (QGMLPVCPLL…WASARFSWLS (74 aa)) lie on the Virion surface side of the membrane. Asn-320 carries an N-linked (GlcNAc...) asparagine; by host glycan. The helical transmembrane segment at 349-369 (LLVQFVQWCVGLSPTVWLLVI) threads the bilayer. Residues 370–375 (WMIWYW) are Intravirion-facing. The helical transmembrane segment at 376–398 (GPNLCSILSPFIPLLPIFCYLWA) threads the bilayer. Residues 399-400 (SI) lie on the Virion surface side of the membrane.

The protein belongs to the orthohepadnavirus major surface antigen family. In its internal form (Li-HBsAg), interacts with the capsid protein and with the isoform S. Interacts with host chaperone CANX. In terms of assembly, associates with host chaperone CANX through its pre-S2 N glycan; this association may be essential for isoform M proper secretion. As to quaternary structure, interacts with isoform L. Interacts with the antigens of satellite virus HDV (HDVAgs); this interaction is required for encapsidation of HDV genomic RNA. In terms of processing, isoform M is N-terminally acetylated by host at a ratio of 90%, and N-glycosylated by host at the pre-S2 region. Myristoylated.

The protein localises to the virion membrane. Functionally, the large envelope protein exists in two topological conformations, one which is termed 'external' or Le-HBsAg and the other 'internal' or Li-HBsAg. In its external conformation the protein attaches the virus to cell receptors and thereby initiating infection. This interaction determines the species specificity and liver tropism. This attachment induces virion internalization predominantly through caveolin-mediated endocytosis. The large envelope protein also assures fusion between virion membrane and endosomal membrane. In its internal conformation the protein plays a role in virion morphogenesis and mediates the contact with the nucleocapsid like a matrix protein. In terms of biological role, the middle envelope protein plays an important role in the budding of the virion. It is involved in the induction of budding in a nucleocapsid independent way. In this process the majority of envelope proteins bud to form subviral lipoprotein particles of 22 nm of diameter that do not contain a nucleocapsid. The sequence is that of Large envelope protein from Hepatitis B virus genotype H subtype adw4 (isolate Nicaragua/2928Nic/1997) (HBV-H).